We begin with the raw amino-acid sequence, 185 residues long: Pap fimbrial major pilin protein (185 aa).

Positions M1 to A22 are cleaved as a signal peptide. Cysteines 44 and 83 form a disulfide.

It belongs to the fimbrial protein family.

Its subcellular location is the secreted. It localises to the fimbrium. Functionally, polymerizes to form the thick (6.8 nm in diameter) rod of the pilus (also called fimbria). The rod is a right-handed helical cylinder with 3.28 PapA subunits per turn. Pili are polar filaments radiating from the surface of the bacterium to a length of 0.5-1.5 micrometers and numbering 100-300 per cell, and enable bacteria to colonize the epithelium of specific host organs. This is Pap fimbrial major pilin protein (papA) from Escherichia coli.